We begin with the raw amino-acid sequence, 114 residues long: Probable 4-amino-4-deoxy-L-arabinose-phosphoundecaprenol flippase subunit ArnE (114 aa).

The next 3 helical transmembrane spans lie at 38-58, 64-84, and 94-114; these read LTLR…LLWL, LPLS…TLAA, and LRHW…SWHL. One can recognise an EamA domain in the interval 43-112; the sequence is LAIAVVSLGL…IIFGILLMSW (70 aa).

This sequence belongs to the ArnE family. In terms of assembly, heterodimer of ArnE and ArnF.

It localises to the cell inner membrane. It functions in the pathway bacterial outer membrane biogenesis; lipopolysaccharide biosynthesis. Translocates 4-amino-4-deoxy-L-arabinose-phosphoundecaprenol (alpha-L-Ara4N-phosphoundecaprenol) from the cytoplasmic to the periplasmic side of the inner membrane. In Yersinia pseudotuberculosis serotype O:1b (strain IP 31758), this protein is Probable 4-amino-4-deoxy-L-arabinose-phosphoundecaprenol flippase subunit ArnE.